A 440-amino-acid chain; its full sequence is Transposon Ty1-DR3 Gag polyprotein (440 aa).

Composition is skewed to polar residues over residues 1 to 10 (MESQQLSNYP), 48 to 60 (TKANSQQTTTPAS), and 127 to 152 (QSQFPQYPSSVGTPLSTPSPESGNTF). Disordered regions lie at residues 1-93 (MESQ…MMTQ), 126-173 (PQSQ…RPPP), and 352-440 (GSRN…PETY). Positions 153–165 (TDSSSADSDMTST) are enriched in low complexity. Residues 299 to 401 (NNGIHINNKV…NSKSKTARAH (103 aa)) form an RNA-binding region. Residues 402–428 (NVSTSINSPSTDNDSISKSTTEPIQLN) show a composition bias toward polar residues. Position 416 is a phosphoserine (Ser416). Over residues 429-440 (NKHDLHLRPETY) the composition is skewed to basic and acidic residues.

In terms of assembly, homotrimer.

The protein resides in the cytoplasm. Functionally, capsid protein (CA) is the structural component of the virus-like particle (VLP), forming the shell that encapsulates the retrotransposons dimeric RNA genome. The particles are assembled from trimer-clustered units and there are holes in the capsid shells that allow for the diffusion of macromolecules. CA also has nucleocapsid-like chaperone activity, promoting primer tRNA(i)-Met annealing to the multipartite primer-binding site (PBS), dimerization of Ty1 RNA and initiation of reverse transcription. The protein is Transposon Ty1-DR3 Gag polyprotein (TY1A-DR3) of Saccharomyces cerevisiae (strain ATCC 204508 / S288c) (Baker's yeast).